The primary structure comprises 305 residues: Ferredoxin--NADP reductase (305 aa).

FAD-binding residues include Glu-31, Tyr-42, Val-82, and Asp-274.

It belongs to the ferredoxin--NADP reductase type 2 family. In terms of assembly, homodimer. FAD serves as cofactor.

It catalyses the reaction 2 reduced [2Fe-2S]-[ferredoxin] + NADP(+) + H(+) = 2 oxidized [2Fe-2S]-[ferredoxin] + NADPH. The sequence is that of Ferredoxin--NADP reductase from Ignicoccus hospitalis (strain KIN4/I / DSM 18386 / JCM 14125).